The chain runs to 204 residues: Crossover junction endodeoxyribonuclease RuvC (204 aa).

Active-site residues include Asp-7, Glu-68, and Asp-141. 3 residues coordinate Mg(2+): Asp-7, Glu-68, and Asp-141. Residues 164-204 form a disordered region; sequence QAVAAHRTSGASRTPGAAGTPGPSRTPGAPGTSRTLKGRTA.

The protein belongs to the RuvC family. As to quaternary structure, homodimer which binds Holliday junction (HJ) DNA. The HJ becomes 2-fold symmetrical on binding to RuvC with unstacked arms; it has a different conformation from HJ DNA in complex with RuvA. In the full resolvosome a probable DNA-RuvA(4)-RuvB(12)-RuvC(2) complex forms which resolves the HJ. It depends on Mg(2+) as a cofactor.

It is found in the cytoplasm. The enzyme catalyses Endonucleolytic cleavage at a junction such as a reciprocal single-stranded crossover between two homologous DNA duplexes (Holliday junction).. Functionally, the RuvA-RuvB-RuvC complex processes Holliday junction (HJ) DNA during genetic recombination and DNA repair. Endonuclease that resolves HJ intermediates. Cleaves cruciform DNA by making single-stranded nicks across the HJ at symmetrical positions within the homologous arms, yielding a 5'-phosphate and a 3'-hydroxyl group; requires a central core of homology in the junction. The consensus cleavage sequence is 5'-(A/T)TT(C/G)-3'. Cleavage occurs on the 3'-side of the TT dinucleotide at the point of strand exchange. HJ branch migration catalyzed by RuvA-RuvB allows RuvC to scan DNA until it finds its consensus sequence, where it cleaves and resolves the cruciform DNA. The chain is Crossover junction endodeoxyribonuclease RuvC from Streptomyces griseus subsp. griseus (strain JCM 4626 / CBS 651.72 / NBRC 13350 / KCC S-0626 / ISP 5235).